A 208-amino-acid polypeptide reads, in one-letter code: Small ribosomal subunit protein uS4 (208 aa).

The S4 RNA-binding domain maps to 98–161 (QRLDNVVFRM…KSNPQVVRAL (64 aa)).

This sequence belongs to the universal ribosomal protein uS4 family. Part of the 30S ribosomal subunit. Contacts protein S5. The interaction surface between S4 and S5 is involved in control of translational fidelity.

One of the primary rRNA binding proteins, it binds directly to 16S rRNA where it nucleates assembly of the body of the 30S subunit. Functionally, with S5 and S12 plays an important role in translational accuracy. The protein is Small ribosomal subunit protein uS4 of Aliarcobacter butzleri (strain RM4018) (Arcobacter butzleri).